We begin with the raw amino-acid sequence, 267 residues long: Tryptophan synthase alpha chain (267 aa).

Active-site proton acceptor residues include glutamate 47 and aspartate 58.

This sequence belongs to the TrpA family. In terms of assembly, tetramer of two alpha and two beta chains.

It carries out the reaction (1S,2R)-1-C-(indol-3-yl)glycerol 3-phosphate + L-serine = D-glyceraldehyde 3-phosphate + L-tryptophan + H2O. The protein operates within amino-acid biosynthesis; L-tryptophan biosynthesis; L-tryptophan from chorismate: step 5/5. The alpha subunit is responsible for the aldol cleavage of indoleglycerol phosphate to indole and glyceraldehyde 3-phosphate. This Chlorobium chlorochromatii (strain CaD3) protein is Tryptophan synthase alpha chain.